A 413-amino-acid polypeptide reads, in one-letter code: ORC1-type DNA replication protein 10 (413 aa).

ATP contacts are provided by residues 63–67 (VGKTA), tyrosine 211, and arginine 223.

Belongs to the CDC6/cdc18 family.

Involved in regulation of DNA replication. The protein is ORC1-type DNA replication protein 10 (orc10) of Halobacterium salinarum (strain ATCC 700922 / JCM 11081 / NRC-1) (Halobacterium halobium).